Consider the following 434-residue polypeptide: Enolase (434 aa).

Gln-167 contacts (2R)-2-phosphoglycerate. Catalysis depends on Glu-209, which acts as the Proton donor. Residues Asp-246, Glu-291, and Asp-318 each contribute to the Mg(2+) site. (2R)-2-phosphoglycerate-binding residues include Lys-343, Arg-372, Ser-373, and Lys-394. Residue Lys-343 is the Proton acceptor of the active site.

This sequence belongs to the enolase family. As to quaternary structure, component of the RNA degradosome, a multiprotein complex involved in RNA processing and mRNA degradation. It depends on Mg(2+) as a cofactor.

The protein resides in the cytoplasm. It localises to the secreted. Its subcellular location is the cell surface. It catalyses the reaction (2R)-2-phosphoglycerate = phosphoenolpyruvate + H2O. It functions in the pathway carbohydrate degradation; glycolysis; pyruvate from D-glyceraldehyde 3-phosphate: step 4/5. Its function is as follows. Catalyzes the reversible conversion of 2-phosphoglycerate (2-PG) into phosphoenolpyruvate (PEP). It is essential for the degradation of carbohydrates via glycolysis. The protein is Enolase of Buchnera aphidicola subsp. Schizaphis graminum (strain Sg).